A 253-amino-acid polypeptide reads, in one-letter code: Uracil-DNA glycosylase (253 aa).

Asp79 (proton acceptor) is an active-site residue.

The protein belongs to the uracil-DNA glycosylase (UDG) superfamily. UNG family.

It is found in the cytoplasm. The catalysed reaction is Hydrolyzes single-stranded DNA or mismatched double-stranded DNA and polynucleotides, releasing free uracil.. Excises uracil residues from the DNA which can arise as a result of misincorporation of dUMP residues by DNA polymerase or due to deamination of cytosine. The protein is Uracil-DNA glycosylase of Xylella fastidiosa (strain 9a5c).